A 249-amino-acid chain; its full sequence is Adenylate kinase (249 aa).

G43 to T48 contacts ATP. The interval A63–V92 is NMP. Residues T64, R69, G90–V92, G119–R122, and Q126 contribute to the AMP site. The interval G160 to D197 is LID. ATP is bound by residues R161 and S170–Y171. AMP contacts are provided by R194 and R205. An ATP-binding site is contributed by Q233.

It belongs to the adenylate kinase family. AK2 subfamily. In terms of assembly, monomer.

Its subcellular location is the cytoplasm. The protein localises to the cytosol. It localises to the mitochondrion intermembrane space. The catalysed reaction is AMP + ATP = 2 ADP. In terms of biological role, catalyzes the reversible transfer of the terminal phosphate group between ATP and AMP. Plays an important role in cellular energy homeostasis and in adenine nucleotide metabolism. Adenylate kinase activity is critical for regulation of the phosphate utilization and the AMP de novo biosynthesis pathways. This Debaryomyces hansenii (strain ATCC 36239 / CBS 767 / BCRC 21394 / JCM 1990 / NBRC 0083 / IGC 2968) (Yeast) protein is Adenylate kinase.